The primary structure comprises 393 residues: NADH-quinone oxidoreductase subunit D 2 (393 aa).

This sequence belongs to the complex I 49 kDa subunit family. NDH-1 is composed of 14 different subunits. Subunits NuoB, C, D, E, F, and G constitute the peripheral sector of the complex.

Its subcellular location is the cell inner membrane. The enzyme catalyses a quinone + NADH + 5 H(+)(in) = a quinol + NAD(+) + 4 H(+)(out). NDH-1 shuttles electrons from NADH, via FMN and iron-sulfur (Fe-S) centers, to quinones in the respiratory chain. The immediate electron acceptor for the enzyme in this species is believed to be a menaquinone. Couples the redox reaction to proton translocation (for every two electrons transferred, four hydrogen ions are translocated across the cytoplasmic membrane), and thus conserves the redox energy in a proton gradient. This chain is NADH-quinone oxidoreductase subunit D 2, found in Cytophaga hutchinsonii (strain ATCC 33406 / DSM 1761 / CIP 103989 / NBRC 15051 / NCIMB 9469 / D465).